The sequence spans 350 residues: Tetraacyldisaccharide 4'-kinase (350 aa).

49–56 (TTGGTGKT) lines the ATP pocket.

This sequence belongs to the LpxK family.

The catalysed reaction is a lipid A disaccharide + ATP = a lipid IVA + ADP + H(+). It functions in the pathway glycolipid biosynthesis; lipid IV(A) biosynthesis; lipid IV(A) from (3R)-3-hydroxytetradecanoyl-[acyl-carrier-protein] and UDP-N-acetyl-alpha-D-glucosamine: step 6/6. Its function is as follows. Transfers the gamma-phosphate of ATP to the 4'-position of a tetraacyldisaccharide 1-phosphate intermediate (termed DS-1-P) to form tetraacyldisaccharide 1,4'-bis-phosphate (lipid IVA). In Chlorobaculum tepidum (strain ATCC 49652 / DSM 12025 / NBRC 103806 / TLS) (Chlorobium tepidum), this protein is Tetraacyldisaccharide 4'-kinase.